Here is a 247-residue protein sequence, read N- to C-terminus: Complement C1q subcomponent subunit A (247 aa).

The first 24 residues, 1–24 (MEAPRGWLVIMISVLAVSLASSAA), serve as a signal peptide directing secretion. The segment at 26-116 (DTCRDLDGRD…NPGNIKDQRR (91 aa)) is disordered. A compositionally biased stretch (basic and acidic residues) spans 27 to 38 (TCRDLDGRDGAA). In terms of domain architecture, Collagen-like spans 33–111 (GRDGAARKPG…KGIKGNPGNI (79 aa)). P41 and P47 each carry 4-hydroxyproline. K50 carries the post-translational modification 5-hydroxylysine. K50 is a glycosylation site (O-linked (Gal...) hydroxylysine). 4-hydroxyproline is present on residues P56 and P59. The residue at position 69 (K69) is a 5-hydroxylysine. K69 is a glycosylation site (O-linked (Gal...) hydroxylysine). 4-hydroxyproline occurs at positions 81 and 87. The span at 98–109 (LPGLKGIKGNPG) shows a compositional bias: low complexity. K102 is subject to 5-hydroxylysine. K102 is a glycosylation site (O-linked (Gal...) hydroxylysine). One can recognise a C1q domain in the interval 112 to 247 (KDQRRPAFSA…FSGFLIFPST (136 aa)). The cysteines at positions 174 and 192 are disulfide-linked. Position 201 (Q201) interacts with Ca(2+).

Core component of the complement C1 complex, a calcium-dependent complex composed of 1 molecule of the C1Q subcomplex, 2 molecules of C1R and 2 molecules of C1S. The C1Q subcomplex is composed 18 subunits: 3 chains of C1QA, C1QB, and C1QC trimerize to form 6 collagen-like triple helices connected to six globular ligand-recognition modules (C1q domain). Interacts with CR1 (via Sushi 24 and Sushi 25 domains). Interacts (via C-terminus) with CD33; this interaction activates CD33 inhibitory motifs. O-linked glycans are assumed to be the Glc-Gal disaccharides typically found as secondary modifications of hydroxylated lysines in collagen-like domains.

Its subcellular location is the secreted. It localises to the cell surface. Its activity is regulated as follows. The C1Q subcomplex is inhibited by sulfated molecules, such as triterpenoid sulfates, heparan sulfate, or chondroitin sulfates. Functionally, core component of the complement C1 complex, a multiprotein complex that initiates the classical pathway of the complement system, a cascade of proteins that leads to phagocytosis and breakdown of pathogens and signaling that strengthens the adaptive immune system. The classical complement pathway is initiated by the C1Q subcomplex of the C1 complex, which specifically binds IgG or IgM immunoglobulins complexed with antigens, forming antigen-antibody complexes on the surface of pathogens: C1QA, together with C1QB and C1QC, specifically recognizes and binds the Fc regions of IgG or IgM via its C1q domain. Immunoglobulin-binding activates the proenzyme C1R, which cleaves C1S, initiating the proteolytic cascade of the complement system. The C1Q subcomplex is activated by a hexamer of IgG complexed with antigens, while it is activated by a pentameric IgM. The C1Q subcomplex also recognizes and binds phosphatidylserine exposed on the surface of cells undergoing programmed cell death, possibly promoting activation of the complement system. This is Complement C1q subcomponent subunit A (C1QA) from Sus scrofa (Pig).